The sequence spans 1025 residues: Multidrug resistance protein MdtC (1025 aa).

A run of 12 helical transmembrane segments spans residues 3 to 23 (FFAL…AITL), 333 to 353 (EVEQ…FLFL), 360 to 380 (IIPA…MYLC), 387 to 407 (LSLM…IVVL), 431 to 451 (VGFT…PLLL), 463 to 483 (FAVT…TLTP), 528 to 548 (LVGV…ISIP), 853 to 873 (VILI…LYES), 875 to 895 (VHPL…LLAL), 897 to 917 (LFNA…IGIV), 953 to 973 (PIMM…LSGG), and 984 to 1004 (ITIV…TPVV).

It belongs to the resistance-nodulation-cell division (RND) (TC 2.A.6) family. MdtC subfamily. Part of a tripartite efflux system composed of MdtA, MdtB and MdtC. MdtC forms a heteromultimer with MdtB.

It is found in the cell inner membrane. Its function is as follows. The MdtABC tripartite complex confers resistance against novobiocin and deoxycholate. This Escherichia coli O139:H28 (strain E24377A / ETEC) protein is Multidrug resistance protein MdtC.